The chain runs to 170 residues: MDLKSLIREVPDFPKPGILFRDITTLLQNEQGLRYTIDRLTQAFSDQAIDYVAGIESRGFIFGAPLAYKLGAGFVPIRKAGKLCAEVHTVEYALEYGTDRLEIHKDAIHTGGRVLIVDDLIATGGTAAAAAQLITLCGGDLVSYAFIIELQDLGGRKNLPDVPIKVLVEY.

It belongs to the purine/pyrimidine phosphoribosyltransferase family. As to quaternary structure, homodimer.

The protein localises to the cytoplasm. It carries out the reaction AMP + diphosphate = 5-phospho-alpha-D-ribose 1-diphosphate + adenine. It functions in the pathway purine metabolism; AMP biosynthesis via salvage pathway; AMP from adenine: step 1/1. Functionally, catalyzes a salvage reaction resulting in the formation of AMP, that is energically less costly than de novo synthesis. The protein is Adenine phosphoribosyltransferase of Cyanothece sp. (strain PCC 7425 / ATCC 29141).